The following is a 1509-amino-acid chain: Dynein axonemal assembly factor 1 homolog (1509 aa).

LRR repeat units follow at residues 34–56 (RLNDTLYLHYQGFQCIEHLEEYT), 57–78 (ELKCLWLECNAISEIQGLEKLS), 79–100 (KLKCLFLQNNLITKIENLEPCR), 101–122 (ELDTLNLSSNHIRKIQNIGTNI), 125–146 (VLNTLTIASNYLKDSESLSDLV), and 150–171 (TLSVLDLSNNRIDDILIVKIFE). Positions 185-223 (PVVSRLPQYRKTLILACKELTYLDSRPVFPRDRACAEAW) constitute an LRRCT domain. 4 disordered regions span residues 252–280 (CTIRIRNSHRPPDQQDPLLRSSDSEDDTC), 306–327 (HPTSESGASTSSSVEDNDATSS), 962–1008 (SGDL…DSKN), and 1103–1122 (TLQTSFSTVGSDEGKTKLRN). Over residues 309–318 (SESGASTSSS) the composition is skewed to low complexity. Residues 978–990 (SESEDYDTADDEY) show a composition bias toward acidic residues. A compositionally biased stretch (polar residues) spans 1103–1112 (TLQTSFSTVG).

It belongs to the DNAAF1 family.

It is found in the cell projection. The protein localises to the cilium. In terms of biological role, cilium-specific protein required for cilia structures. This Drosophila yakuba (Fruit fly) protein is Dynein axonemal assembly factor 1 homolog (dtr).